Consider the following 95-residue polypeptide: MSYTIAAQIRTEIGKGSSRRLRHANKVPAVIYGPGKEAISIVFDHKDIINIQANEDFYTTDLTISLDGKDVAVRVQDMQRHAFKPLIEHIDFKFA.

The protein belongs to the bacterial ribosomal protein bL25 family. In terms of assembly, part of the 50S ribosomal subunit; part of the 5S rRNA/L5/L18/L25 subcomplex. Contacts the 5S rRNA. Binds to the 5S rRNA independently of L5 and L18.

This is one of the proteins that binds to the 5S RNA in the ribosome where it forms part of the central protuberance. The sequence is that of Large ribosomal subunit protein bL25 from Shewanella piezotolerans (strain WP3 / JCM 13877).